The sequence spans 83 residues: Large ribosomal subunit protein uL23 (83 aa).

The protein belongs to the universal ribosomal protein uL23 family. Part of the 50S ribosomal subunit. Contacts protein L29.

Binds to 23S rRNA. One of the proteins that surrounds the polypeptide exit tunnel on the outside of the ribosome. This Archaeoglobus fulgidus (strain ATCC 49558 / DSM 4304 / JCM 9628 / NBRC 100126 / VC-16) protein is Large ribosomal subunit protein uL23.